The sequence spans 132 residues: Interleukin-13 (132 aa).

An N-terminal signal peptide occupies residues 1–18 (MALLLTTVIALTCLGGFA). Residues Asn-38, Asn-49, Asn-57, and Asn-72 are each glycosylated (N-linked (GlcNAc...) asparagine). 2 disulfides stabilise this stretch: Cys-48/Cys-76 and Cys-64/Cys-90.

This sequence belongs to the IL-4/IL-13 family. Interacts with IL13RA2.

It is found in the secreted. Its function is as follows. Cytokine that plays important roles in allergic inflammation and immune response to parasite infection. Synergizes with IL2 in regulating interferon-gamma synthesis. Stimulates B-cell proliferation, and activation of eosinophils, basophils, and mast cells. Plays an important role in controlling IL33 activity by modulating the production of transmembrane and soluble forms of interleukin-1 receptor-like 1/IL1RL1. Displays the capacity to antagonize Th1-driven proinflammatory immune response and downregulates synthesis of many proinflammatory cytokines including IL1, IL6, IL10, IL12 and TNF-alpha through a mechanism that partially involves suppression of NF-kappa-B. Also functions on nonhematopoietic cells, including endothelial cells where it induces vascular cell adhesion protein 1/VCAM1, which is important in the recruitment of eosinophils. Exerts its biological effects through its receptors which comprises the IL4R chain and the IL13RA1 chain, to activate JAK1 and TYK2, leading to the activation of STAT6. Aside from IL13RA1, another receptor IL13RA2 acts as a high affinity decoy for IL13 and mediates internalization and depletion of extracellular IL13. The sequence is that of Interleukin-13 (IL13) from Macaca mulatta (Rhesus macaque).